The sequence spans 103 residues: Large ribosomal subunit protein bL21 (103 aa).

Belongs to the bacterial ribosomal protein bL21 family. In terms of assembly, part of the 50S ribosomal subunit. Contacts protein L20.

Its function is as follows. This protein binds to 23S rRNA in the presence of protein L20. The sequence is that of Large ribosomal subunit protein bL21 from Thiobacillus denitrificans (strain ATCC 25259 / T1).